A 102-amino-acid polypeptide reads, in one-letter code: Aspartyl/glutamyl-tRNA(Asn/Gln) amidotransferase subunit C (102 aa).

Belongs to the GatC family. Heterotrimer of A, B and C subunits.

It carries out the reaction L-glutamyl-tRNA(Gln) + L-glutamine + ATP + H2O = L-glutaminyl-tRNA(Gln) + L-glutamate + ADP + phosphate + H(+). The enzyme catalyses L-aspartyl-tRNA(Asn) + L-glutamine + ATP + H2O = L-asparaginyl-tRNA(Asn) + L-glutamate + ADP + phosphate + 2 H(+). In terms of biological role, allows the formation of correctly charged Asn-tRNA(Asn) or Gln-tRNA(Gln) through the transamidation of misacylated Asp-tRNA(Asn) or Glu-tRNA(Gln) in organisms which lack either or both of asparaginyl-tRNA or glutaminyl-tRNA synthetases. The reaction takes place in the presence of glutamine and ATP through an activated phospho-Asp-tRNA(Asn) or phospho-Glu-tRNA(Gln). The chain is Aspartyl/glutamyl-tRNA(Asn/Gln) amidotransferase subunit C from Bordetella pertussis (strain Tohama I / ATCC BAA-589 / NCTC 13251).